The following is a 140-amino-acid chain: Large ribosomal subunit protein uL24 (140 aa).

This sequence belongs to the universal ribosomal protein uL24 family. In terms of assembly, part of the 50S ribosomal subunit.

Its function is as follows. One of two assembly initiator proteins, it binds directly to the 5'-end of the 23S rRNA, where it nucleates assembly of the 50S subunit. Functionally, located at the polypeptide exit tunnel on the outside of the subunit. In Nanoarchaeum equitans (strain Kin4-M), this protein is Large ribosomal subunit protein uL24.